A 112-amino-acid chain; its full sequence is C-C motif chemokine 27 (112 aa).

The first 24 residues, 1–24 (MKGPPTFCSLLLLSLLLSPDPTAA), serve as a signal peptide directing secretion. Disulfide bonds link Cys-33/Cys-62 and Cys-34/Cys-77.

It belongs to the intercrine beta (chemokine CC) family. Monomer, dimer, and tetramer. Heparin avidly promotes oligomerization. Interacts with TNFAIP6 (via Link domain). Testis, thymus, placenta, ovary and skin.

The protein localises to the secreted. Chemotactic factor that attracts skin-associated memory T-lymphocytes. May play a role in mediating homing of lymphocytes to cutaneous sites. Binds to CCR10. This chain is C-C motif chemokine 27 (CCL27), found in Homo sapiens (Human).